The following is a 577-amino-acid chain: MNIQALLSEKVSQAMIAAGAPADCEPQVRQSAKVQFGDYQANGMMAVAKKLGMAPRQLAEQVLTHLDLSGIASKVEIAGPGFINIFLEPAFLSEQVQQALTSDRLGVSQPTRQTIVVDYSAPNVAKEMHVGHLRSTIIGDAAVRTLEFLGHHVIRANHVGDWGTQFGMLIAWLEKQQQENAGDMALADLEGFYRDAKKHYDEDEAFAERARNYVVKLQSGDTYFREMWRKLVDITMTQNQITYDRLNVTLTRDDVMGESLYNPMLPGIVADLKAKGLAVESEGATVVFLDEFKNKEGDPMGVIIQKKDGGYLYTTTDIACAKYRYETLHADRVLYYIDSRQHQHLMQAWTIVRKAGYVPDSVPLEHHMFGMMLGKDGKPFKTRAGGTVKLADLLDEALERARRLVAEKNPDMSADELEKLANAVGIGAVKYADLSKNRTTDYIFDWDNMLAFEGNTAPYMQYAYTRVLSVFRKADIDEQALASAPVIISEDREAQLAARLLQFEETLTVVAREGTPHVMCAYLYDVAGLFSGFYEHCPILSAENDAVRNSRLKLAQLTAKTLKLGLDTLGIETVERM.

Residues 122–132 (PNVAKEMHVGH) carry the 'HIGH' region motif.

Belongs to the class-I aminoacyl-tRNA synthetase family. In terms of assembly, monomer.

The protein resides in the cytoplasm. The enzyme catalyses tRNA(Arg) + L-arginine + ATP = L-arginyl-tRNA(Arg) + AMP + diphosphate. The polypeptide is Arginine--tRNA ligase (Salmonella gallinarum (strain 287/91 / NCTC 13346)).